The primary structure comprises 400 residues: Exodeoxyribonuclease 7 large subunit (400 aa).

The protein belongs to the XseA family. In terms of assembly, heterooligomer composed of large and small subunits.

The protein resides in the cytoplasm. It catalyses the reaction Exonucleolytic cleavage in either 5'- to 3'- or 3'- to 5'-direction to yield nucleoside 5'-phosphates.. Functionally, bidirectionally degrades single-stranded DNA into large acid-insoluble oligonucleotides, which are then degraded further into small acid-soluble oligonucleotides. This Clostridium perfringens (strain 13 / Type A) protein is Exodeoxyribonuclease 7 large subunit.